The chain runs to 202 residues: Small ribosomal subunit protein uS4 (202 aa).

Residues 17–42 (ELPGLSRKTPRRAYPPGQHGQARKKR) are disordered. Residues 90–152 (MRLDNTIFRL…DASRKLIETH (63 aa)) enclose the S4 RNA-binding domain.

The protein belongs to the universal ribosomal protein uS4 family. As to quaternary structure, part of the 30S ribosomal subunit. Contacts protein S5. The interaction surface between S4 and S5 is involved in control of translational fidelity.

One of the primary rRNA binding proteins, it binds directly to 16S rRNA where it nucleates assembly of the body of the 30S subunit. In terms of biological role, with S5 and S12 plays an important role in translational accuracy. This is Small ribosomal subunit protein uS4 from Acaryochloris marina (strain MBIC 11017).